Reading from the N-terminus, the 356-residue chain is Protein RecA (356 aa).

Residue 78–85 coordinates ATP; the sequence is GPESSGKT.

Belongs to the RecA family.

It is found in the cytoplasm. Functionally, can catalyze the hydrolysis of ATP in the presence of single-stranded DNA, the ATP-dependent uptake of single-stranded DNA by duplex DNA, and the ATP-dependent hybridization of homologous single-stranded DNAs. It interacts with LexA causing its activation and leading to its autocatalytic cleavage. This is Protein RecA from Paracoccus denitrificans.